Reading from the N-terminus, the 595-residue chain is Pyranose dehydrogenase (595 aa).

Positions 1–21 are cleaved as a signal peptide; that stretch reads MARFNARLFSIAILGFQVARS. Asn-95 and Asn-110 each carry an N-linked (GlcNAc...) asparagine glycan. His-123 bears the Tele-8alpha-FAD histidine mark. N-linked (GlcNAc...) asparagine glycans are attached at residues Asn-195, Asn-337, Asn-367, Asn-502, and Asn-510. His-530 serves as the catalytic Proton acceptor. Residue Asn-541 is glycosylated (N-linked (GlcNAc...) asparagine). The active site involves His-574.

It belongs to the GMC oxidoreductase family. In terms of assembly, monomer. FAD serves as cofactor. Post-translationally, N-glycosylated.

It is found in the secreted. It catalyses the reaction pyranose + acceptor = pyranos-2-ulose + reduced acceptor.. The catalysed reaction is pyranose + acceptor = pyranos-3-ulose + reduced acceptor.. It carries out the reaction pyranose + acceptor = pyranos-2,3-diulose + reduced acceptor.. The enzyme catalyses a pyranoside + acceptor = a pyranosid-3-ulose + reduced acceptor.. It catalyses the reaction a pyranoside + acceptor = a pyranosid-3,4-diulose + reduced acceptor.. Catalyzes the single-oxidation or sequential double oxidation reaction of carbohydrates primarily at carbon-2 and/or carbon-3 with the concomitant reduction of the flavin. The enzyme exhibits a broad sugar substrate specificity, oxidizing different aldopyranoses to the corresponding C-1, C-2, C-3 or C-1,2, C-2,3 and C-3,4 (di)dehydro sugars with substrate-specific regioselectivity. Accepts only a narrow range of electron acceptors such as substituted benzoquinones and complexed metal ions and reacts extremely slowly with O(2) as acceptor. May play a role in the natural recycling of plant matter by oxidizing all major monosaccharides in lignocellulose and by reducing quinone compounds or reactive radical species generated during lignin depolymerization. In Agaricus campestris (Field mushroom), this protein is Pyranose dehydrogenase.